We begin with the raw amino-acid sequence, 95 residues long: Probable FAD-linked sulfhydryl oxidase OPG072 (95 aa).

The Intravirion portion of the chain corresponds to 1–8 (MNPKHWGR). An ERV/ALR sulfhydryl oxidase domain is found at 1–95 (MNPKHWGRAV…AIDVSKVKPL (95 aa)). A helical membrane pass occupies residues 9-25 (AVWTIIFIVLSQAGLDG). Over 26–95 (NIEACKRKLY…AIDVSKVKPL (70 aa)) the chain is Virion surface. The cysteines at positions 43 and 46 are disulfide-linked.

Belongs to the orthopoxvirus OPG072 family. As to quaternary structure, interacts with OPG128; this interaction involves formation of a transient disulfide-bonded intermediate, allowing disulfide bond transfer. FAD serves as cofactor.

It localises to the virion membrane. It is found in the host cytoplasm. It carries out the reaction 2 R'C(R)SH + O2 = R'C(R)S-S(R)CR' + H2O2. Its function is as follows. FAD-dependent sulfhydryl oxidase that catalyzes disulfide bond formation. The complete pathway for formation of disulfide bonds in intracellular virion membrane proteins sequentially involves thiol-disulfide transfer between OPG072, OPG128 and OPG088. This Vaccinia virus (strain Copenhagen) (VACV) protein is Probable FAD-linked sulfhydryl oxidase OPG072 (OPG072).